The primary structure comprises 824 residues: Dapper 1-B (824 aa).

Disordered stretches follow at residues 1 to 33, 131 to 150, and 515 to 534; these read MKPI…RQRT, EEHL…LSDG, and HASS…EGSS. An interaction with tcf7l1-A region spans residues 2-343; the sequence is KPIPAAPEPL…PVRTNKPRTS (342 aa). The segment covering 16–33 has biased composition (basic and acidic residues); the sequence is DSPRRKDKGEAESERQRT. The stretch at 84-139 forms a coiled coil; sequence EEKFLEDNILLLKKQLNCLRKRDAGLLSQLHELDKQINDLRIDVEKTEEHLETDSR. Positions 520–530 are enriched in basic and acidic residues; that stretch reads FDERPPLDFKS. A PDZ-binding motif is present at residues 821–824; sequence MTTV.

The protein belongs to the dapper family. As to quaternary structure, interacts with dbf4 and tcf7l1-A. Interacts with dvl2/dsh; the interaction is required for dact1-b phosphorylation by CaMK1D and seems to become disrupted by the phosphorylation. Phosphorylated by CaMK1D; the phosphorylation requires binding to dvl2/dsh. As to expression, expressed both in the dorsal lip in early gastrula and throughout the posterior presumptive ectoderm in early neurula. Expressed in the dorsal neural folds at the tailbud stage and highly expressed in the tadpole head, including the brain, retina and cartilaginous branchial arch derivatives.

It localises to the cytoplasm. Its subcellular location is the nucleus. In terms of biological role, involved in regulation of intracellular signaling pathways during development. Specifically thought to play a role in canonical and/or non-canonical Wnt signaling pathways through interaction with DSH (Dishevelled) family proteins. Binds to dvl2 to regulate the degradation of beta-catenin (ctnnb1-A and possibly ctnnb1-B), thereby modulating the transcriptional activation of target genes of the Wnt signaling pathway. Seems to promote beta-catenin degradation if not phosphorylated and to block beta-catenin degradation if phosphorylated by CaMK1D. Involved in regulation of catenin delta/ctnnd1 protein level. May also bind to and directly stimulate the activity of tcf7l1-A. Also regulates the activation by dvl2 of jnk, a component of ctnnb1/beta-catenin-independent frizzled signaling. Required for notochord and head formation. In Xenopus laevis (African clawed frog), this protein is Dapper 1-B (dact1-b).